The primary structure comprises 483 residues: Argininosuccinate lyase (483 aa).

The protein belongs to the lyase 1 family. Argininosuccinate lyase subfamily.

Its subcellular location is the cytoplasm. It catalyses the reaction 2-(N(omega)-L-arginino)succinate = fumarate + L-arginine. The protein operates within amino-acid biosynthesis; L-arginine biosynthesis; L-arginine from L-ornithine and carbamoyl phosphate: step 3/3. The chain is Argininosuccinate lyase from Albidiferax ferrireducens (strain ATCC BAA-621 / DSM 15236 / T118) (Rhodoferax ferrireducens).